A 361-amino-acid chain; its full sequence is Phospho-N-acetylmuramoyl-pentapeptide-transferase (361 aa).

A run of 10 helical transmembrane segments spans residues 27 to 47, 70 to 90, 97 to 117, 134 to 154, 167 to 187, 199 to 219, 236 to 256, 263 to 283, 288 to 308, and 338 to 358; these read ILAS…MIRW, GTPT…CLLW, SLWL…VDDY, YFWQ…NASL, TVTW…IVGS, GLAI…AYAS, TGEL…FLWY, VFMG…VAIV, LVLL…ILQV, and KVIV…LATL.

The protein belongs to the glycosyltransferase 4 family. MraY subfamily. Mg(2+) is required as a cofactor.

Its subcellular location is the cell inner membrane. It catalyses the reaction UDP-N-acetyl-alpha-D-muramoyl-L-alanyl-gamma-D-glutamyl-meso-2,6-diaminopimeloyl-D-alanyl-D-alanine + di-trans,octa-cis-undecaprenyl phosphate = di-trans,octa-cis-undecaprenyl diphospho-N-acetyl-alpha-D-muramoyl-L-alanyl-D-glutamyl-meso-2,6-diaminopimeloyl-D-alanyl-D-alanine + UMP. It functions in the pathway cell wall biogenesis; peptidoglycan biosynthesis. Functionally, catalyzes the initial step of the lipid cycle reactions in the biosynthesis of the cell wall peptidoglycan: transfers peptidoglycan precursor phospho-MurNAc-pentapeptide from UDP-MurNAc-pentapeptide onto the lipid carrier undecaprenyl phosphate, yielding undecaprenyl-pyrophosphoryl-MurNAc-pentapeptide, known as lipid I. This is Phospho-N-acetylmuramoyl-pentapeptide-transferase from Legionella pneumophila (strain Paris).